The chain runs to 264 residues: Thymidylate synthase (264 aa).

Residue R21 coordinates dUMP. Position 51 (H51) interacts with (6R)-5,10-methylene-5,6,7,8-tetrahydrofolate. Residue C146 is the Nucleophile of the active site. Residues 166-169 (RSAD), N177, and 207-209 (HIY) each bind dUMP. D169 contributes to the (6R)-5,10-methylene-5,6,7,8-tetrahydrofolate binding site. Residue A263 coordinates (6R)-5,10-methylene-5,6,7,8-tetrahydrofolate.

The protein belongs to the thymidylate synthase family. Bacterial-type ThyA subfamily. Homodimer.

It localises to the cytoplasm. It catalyses the reaction dUMP + (6R)-5,10-methylene-5,6,7,8-tetrahydrofolate = 7,8-dihydrofolate + dTMP. It participates in pyrimidine metabolism; dTTP biosynthesis. Catalyzes the reductive methylation of 2'-deoxyuridine-5'-monophosphate (dUMP) to 2'-deoxythymidine-5'-monophosphate (dTMP) while utilizing 5,10-methylenetetrahydrofolate (mTHF) as the methyl donor and reductant in the reaction, yielding dihydrofolate (DHF) as a by-product. This enzymatic reaction provides an intracellular de novo source of dTMP, an essential precursor for DNA biosynthesis. This Brucella canis (strain ATCC 23365 / NCTC 10854 / RM-666) protein is Thymidylate synthase.